The chain runs to 842 residues: Microcephalin (842 aa).

In terms of domain architecture, BRCT 1 spans 1–93 (MAAPILKDVV…AHIDESLFPA (93 aa)). Phosphoserine is present on residues S279, S287, S296, and S333. T335 is modified (phosphothreonine). Basic residues predominate over residues 346 to 359 (HSRPRSSSVKRKRV). Disordered stretches follow at residues 346-375 (HSRP…KRKR), 418-443 (PDNL…AQFS), and 563-624 (VGLK…PTRR). Polar residues-rich tracts occupy residues 434–443 (QLPSNPAQFS) and 566–582 (KSTQ…NSSE). The segment covering 586 to 608 (PSEHEPRSVVDCNVERSAEEKEN) has biased composition (basic and acidic residues). 2 consecutive BRCT domains span residues 647-737 (SGKG…PFEL) and 758-840 (YRGT…NYLL).

Interacts with CDC27 and maybe other components of the APC/C complex. Interacts with histone variant H2AX under DNA damage conditions.

Its subcellular location is the cytoplasm. It is found in the cytoskeleton. The protein resides in the microtubule organizing center. The protein localises to the centrosome. In terms of biological role, implicated in chromosome condensation and DNA damage induced cellular responses. May play a role in neurogenesis and regulation of the size of the cerebral cortex. The chain is Microcephalin from Macaca fascicularis (Crab-eating macaque).